A 150-amino-acid polypeptide reads, in one-letter code: Large ribosomal subunit protein bL9 (150 aa).

Belongs to the bacterial ribosomal protein bL9 family.

Functionally, binds to the 23S rRNA. In Vesicomyosocius okutanii subsp. Calyptogena okutanii (strain HA), this protein is Large ribosomal subunit protein bL9.